A 238-amino-acid chain; its full sequence is Ubiquinone biosynthesis O-methyltransferase (238 aa).

The S-adenosyl-L-methionine site is built by arginine 40, glycine 59, aspartate 81, and methionine 126.

It belongs to the methyltransferase superfamily. UbiG/COQ3 family.

The catalysed reaction is a 3-demethylubiquinol + S-adenosyl-L-methionine = a ubiquinol + S-adenosyl-L-homocysteine + H(+). It carries out the reaction a 3-(all-trans-polyprenyl)benzene-1,2-diol + S-adenosyl-L-methionine = a 2-methoxy-6-(all-trans-polyprenyl)phenol + S-adenosyl-L-homocysteine + H(+). Its pathway is cofactor biosynthesis; ubiquinone biosynthesis. In terms of biological role, O-methyltransferase that catalyzes the 2 O-methylation steps in the ubiquinone biosynthetic pathway. The sequence is that of Ubiquinone biosynthesis O-methyltransferase from Neisseria meningitidis serogroup A / serotype 4A (strain DSM 15465 / Z2491).